We begin with the raw amino-acid sequence, 304 residues long: Protein pxr1 (304 aa).

The segment covering 1–11 has biased composition (basic residues); that stretch reads MGLAAPRKKTK. Disordered regions lie at residues 1-25, 144-238, and 256-276; these read MGLA…SRST, NATA…DTET, and TSLL…MGRR. Residues 15 to 25 show a composition bias toward polar residues; it reads DPNNTSWSRST. The region spanning 25-79 is the G-patch domain; that stretch reads TDGFGHRILKAQGWTPGDFLGARNATHSDLFTTASASHIRVVLKDDTLGLGARPK. Basic and acidic residues-rich tracts occupy residues 154 to 170 and 204 to 238; these read LRVD…HENG and GKEM…DTET. Residues 256–266 are compositionally biased toward polar residues; that stretch reads TSLLASNGPST.

This sequence belongs to the PINX1 family.

The protein resides in the nucleus. Its subcellular location is the nucleolus. Its function is as follows. Involved in rRNA-processing at A0, A1 and A2 sites and negatively regulates telomerase. In Aspergillus fumigatus (strain ATCC MYA-4609 / CBS 101355 / FGSC A1100 / Af293) (Neosartorya fumigata), this protein is Protein pxr1 (pxr1).